The chain runs to 208 residues: Cytochrome c oxidase assembly protein CtaG (208 aa).

The Cytoplasmic portion of the chain corresponds to 1–19; the sequence is MPDTQPNVSPNPIRRRGLG. Residues 20 to 42 form a helical; Signal-anchor for type II membrane protein membrane-spanning segment; it reads RDATVASICGLVVALMVGASFAA. The Periplasmic portion of the chain corresponds to 43-208; it reads VPFYNWFCRT…TAPDKRKGNL (166 aa).

It belongs to the COX11/CtaG family.

It localises to the cell inner membrane. In terms of biological role, exerts its effect at some terminal stage of cytochrome c oxidase synthesis, probably by being involved in the insertion of the copper B into subunit I. This Rhodopseudomonas palustris (strain HaA2) protein is Cytochrome c oxidase assembly protein CtaG.